Here is a 358-residue protein sequence, read N- to C-terminus: C-X-C chemokine receptor type 4-A (358 aa).

The interval 1–25 (MDGFSGGIDINIFDGNSTENGSGDF) is important for chemokine binding and signaling. Over 1–44 (MDGFSGGIDINIFDGNSTENGSGDFEDFIEPCFMHENSDFNRIF) the chain is Extracellular. 2 N-linked (GlcNAc...) asparagine glycosylation sites follow: N16 and N20. 2 disulfides stabilise this stretch: C32–C281 and C113–C190. The helical transmembrane segment at 45–67 (LPTIYSFIFLLGIIGNGLVVVVM) threads the bilayer. Residues 68 to 81 (GYQKKSRTMTDKYR) are Cytoplasmic-facing. Residues 82-103 (LHLSVADLLFVFTLPFWSVDAA) form a helical membrane-spanning segment. A chemokine binding region spans residues 98 to 101 (WSVD). Residues 104–114 (IGWYFKEFLCK) are Extracellular-facing. Residues 115 to 134 (AVHVIYTVNLYSSVLILAFI) form a helical membrane-spanning segment. Residues 117–121 (HVIYT) form a chemokine binding region. The Cytoplasmic portion of the chain corresponds to 135-158 (SLDRYLAIVHATNSQGSRKMLADK). The segment at 139–151 (YLAIVHATNSQGS) is involved in dimerization; when bound to chemokine. Residues 159 to 178 (VVYAGVWLPALLLTVPDLVF) form a helical membrane-spanning segment. Residues 179 to 202 (ARVSDENGQFVCDRIYPIENRETW) are Extracellular-facing. The segment at 190 to 194 (CDRIY) is chemokine binding, important for signaling. A helical membrane pass occupies residues 203-223 (TVGFRFLHITVGLILPGLIIL). At 224–248 (ICYCVIISKLSHSKGHQKRKALKTT) the chain is on the cytoplasmic side. Residues 249-268 (VILILAFFACWLPYYVCLTT) traverse the membrane as a helical segment. At 269–289 (DTFMLLGLVKGDCIWENTLHM) the chain is on the extracellular side. Residues 290-309 (AISITEALAFFHCCLNPILY) form a helical membrane-spanning segment. Over 310-358 (AFLGAKFKTSAQNAFTSVSRGSSLKILSKKRAGLSSVSTESESSSFHSS) the chain is Cytoplasmic. Residues 338–358 (KKRAGLSSVSTESESSSFHSS) are disordered. Residues 344–358 (SSVSTESESSSFHSS) are compositionally biased toward low complexity.

It belongs to the G-protein coupled receptor 1 family. As to quaternary structure, monomer. Can form dimers. In terms of processing, sulfation is required for efficient binding of cxcl12/sdf-1alpha and promotes its dimerization. O- and N-glycosylated. In terms of tissue distribution, highly expressed in the embryonic nervous system including forebrain, hindbrain and sensory organs (including eye), and in neural crest cells. Also expressed in the dorsal lateral plate, the first site of definitive hematopoiesis in the embryo. Appears in migrating presumptive primordial germ cells (pPGCs) from stage 24. Expressed in the epidermis at stage 40. In the adult, highly expressed in the spleen with lower levels of expression in the liver and very low levels in kidney, heart, skin and brain.

Its subcellular location is the cell membrane. It is found in the cytoplasm. The protein resides in the nucleus. It localises to the early endosome. The protein localises to the late endosome. Its subcellular location is the lysosome. In terms of biological role, receptor for the C-X-C chemokine cxcl12/sdf-1. Transduces a signal by increasing the intracellular level of calcium ions. Signaling with cxcl12/sdf-1 mediates the directional movement of mesodermal cells during gastrulation. May play a role in the migration of embryonic presumptive primordial germ cells (pPGCs). May also be involved in regulating the migration of hematopoietic stem cells into the larval liver. In Xenopus laevis (African clawed frog), this protein is C-X-C chemokine receptor type 4-A (cxcr4-a).